The primary structure comprises 467 residues: MNTVRSEKDSMGAIDVPADKLWGAQTQRSLEHFRISTEKMPTSLIHALALTKRAAAKVNEDLGLLSEEKASAIRQAADEVLAGQHDDEFPLAIWQTGSGTQSNMNMNEVLANRASELLGGVRGMERKVHPNDDVNKSQSSNDVFPTAMHVAALLALRKQLIPQLKTLTQTLNEKSRAFADIVKIGRTHLQDATPLTLGQEISGWVAMLEHNLKHIEYSLPHVAELALGGTAVGTGLNTHPEYARRVADELAVITCAPFVTAPNKFEALATCDALVQAHGALKGLAASLMKIANDVRWLASGPRCGIGEISIPENEPGSSIMPGKVNPTQCEALTMLCCQVMGNDVAINMGGASGNFELNVFRPMVIHNFLQSVRLLADGMESFNKHCAVGIEPNRERINQLLNESLMLVTALNTHIGYDKAAEIAKKAHKEGLTLKAAALALGYLSEAEFDSWVRPEQMVGSMKAGR.

Residues 98-100, Arg126, 129-132, 139-141, and Thr187 each bind substrate; these read SGT, HPND, and SSN. The active-site Proton donor/acceptor is His188. The active site involves Ser318. Residues Ser319 and 324 to 326 contribute to the substrate site; that span reads KVN.

Belongs to the class-II fumarase/aspartase family. Fumarase subfamily. As to quaternary structure, homotetramer.

It localises to the cytoplasm. It catalyses the reaction (S)-malate = fumarate + H2O. It participates in carbohydrate metabolism; tricarboxylic acid cycle; (S)-malate from fumarate: step 1/1. Its activity is regulated as follows. Inhibited by ATP, citrate and S-2,3-dicarboxyaziridine. Involved in the TCA cycle. FumC seems to be a backup enzyme for FumA under conditions of iron limitation and oxidative stress. Catalyzes the stereospecific interconversion of fumarate to L-malate. This is Fumarate hydratase class II from Escherichia coli (strain K12).